The primary structure comprises 144 residues: Transcriptional regulator SlyA (144 aa).

The region spanning 2-135 (ESPLGSDLAR…LIKLIAKLEH (134 aa)) is the HTH marR-type domain. The segment at residues 49–72 (QIQLAKAIGIEQPSLVRTLDQLED) is a DNA-binding region (H-T-H motif).

This sequence belongs to the SlyA family. In terms of assembly, homodimer.

It is found in the cytoplasm. Functionally, transcription regulator that can specifically activate or repress expression of target genes. Required for virulence and survival in the macrophage environment. Probably activates the transcription of ssrB. Independently of ssrB activation, capable of stimulating the expression of virulence genes found on pathogenicity island 2 (SPI2). Probably activates expression of ispA, xseB genes, and of omp operon. The chain is Transcriptional regulator SlyA from Salmonella typhimurium (strain LT2 / SGSC1412 / ATCC 700720).